The following is a 131-amino-acid chain: Small ribosomal subunit protein uS11 (131 aa).

This sequence belongs to the universal ribosomal protein uS11 family. Part of the 30S ribosomal subunit. Interacts with proteins S7 and S18. Binds to IF-3.

In terms of biological role, located on the platform of the 30S subunit, it bridges several disparate RNA helices of the 16S rRNA. Forms part of the Shine-Dalgarno cleft in the 70S ribosome. In Helicobacter acinonychis (strain Sheeba), this protein is Small ribosomal subunit protein uS11.